The sequence spans 233 residues: 2-amino-5-formylamino-6-ribosylaminopyrimidin-4(3H)-one 5'-monophosphate deformylase (233 aa).

Glu33, His35, Asp44, and His114 together coordinate Fe cation.

This sequence belongs to the creatininase superfamily. FAPy deformylase family. Homodimer. The cofactor is Fe(2+). Zn(2+) is required as a cofactor.

The catalysed reaction is 2-amino-5-formylamino-6-(5-phospho-D-ribosylamino)pyrimidin-4(3H)-one + H2O = 2,5-diamino-6-(1-D-ribosylamino)pyrimidin-4(3H)-one 5'-phosphate + formate + H(+). It participates in cofactor biosynthesis; coenzyme F420 biosynthesis. The protein operates within cofactor biosynthesis; riboflavin biosynthesis. In terms of biological role, catalyzes the hydrolysis of the formamide of 2-amino-5-formylamino-6-ribosylamino-4(3H)-pyrimidinone 5'-monophosphate (FAPy) to form 2,5-diamino-6-ribosylamino-4(3H)-pyrimidinone 5'-phosphate (APy). The chain is 2-amino-5-formylamino-6-ribosylaminopyrimidin-4(3H)-one 5'-monophosphate deformylase from Methanosphaera stadtmanae (strain ATCC 43021 / DSM 3091 / JCM 11832 / MCB-3).